Reading from the N-terminus, the 346-residue chain is MENVRLTQYSHGAGCGCKISPQVLDTILRTQLAPFSDPNLLVGNESKDDAAVYDLGNGTAAISTTDFFMPIVDDPFDFGRIAATNAISDIYAMGGKPIMAIAILGWPVNVLAPEIAQQVIEGGRSVCREAGISLAGGHSIDAPEPIFGLAVTGIVDTDRVKRNNRAENGCKLYLTKPLGIGVLTTAEKQSKLADEHKGLARDWMCKLNIPGQDFANVEGVKAMTDVTGFGLMGHLSEICEGSQLKARVDFDSVPYLPGVFDYIAQGCVPGGTTRNFDSYGQKLGAMTEQQKALLCDPQTSGGLLIAVTPDAETEQQLQAIAARHNIELQAIGEMMPLDGDTLIEIC.

Cys-15 is a catalytic residue. Residues Lys-18 and 46–48 contribute to the ATP site; that span reads SKD. Position 49 (Asp-49) interacts with Mg(2+). ATP is bound by residues Asp-66, Asp-89, and 137–139; that span reads GHS. Asp-89 contacts Mg(2+). Asp-225 contributes to the Mg(2+) binding site.

It belongs to the selenophosphate synthase 1 family. Class I subfamily. In terms of assembly, homodimer. Mg(2+) serves as cofactor.

The catalysed reaction is hydrogenselenide + ATP + H2O = selenophosphate + AMP + phosphate + 2 H(+). Its function is as follows. Synthesizes selenophosphate from selenide and ATP. The polypeptide is Selenide, water dikinase (Photobacterium profundum (strain SS9)).